Reading from the N-terminus, the 938-residue chain is Isoleucine--tRNA ligase (938 aa).

A 'HIGH' region motif is present at residues 58 to 68 (PYANGSIHIGH). Residue Lys183 is modified to N6-acetyllysine. Position 561 (Glu561) interacts with L-isoleucyl-5'-AMP. Residues 602-606 (KMSKS) carry the 'KMSKS' region motif. Position 605 (Lys605) interacts with ATP. Cys901, Cys904, Cys921, and Cys924 together coordinate Zn(2+).

This sequence belongs to the class-I aminoacyl-tRNA synthetase family. IleS type 1 subfamily. Monomer. Zn(2+) is required as a cofactor.

It localises to the cytoplasm. It catalyses the reaction tRNA(Ile) + L-isoleucine + ATP = L-isoleucyl-tRNA(Ile) + AMP + diphosphate. Its function is as follows. Catalyzes the attachment of isoleucine to tRNA(Ile). As IleRS can inadvertently accommodate and process structurally similar amino acids such as valine, to avoid such errors it has two additional distinct tRNA(Ile)-dependent editing activities. One activity is designated as 'pretransfer' editing and involves the hydrolysis of activated Val-AMP. The other activity is designated 'posttransfer' editing and involves deacylation of mischarged Val-tRNA(Ile). The protein is Isoleucine--tRNA ligase of Shigella boydii serotype 4 (strain Sb227).